Here is a 430-residue protein sequence, read N- to C-terminus: tRNA(Ile)-lysidine synthase (430 aa).

An ATP-binding site is contributed by 27 to 32; sequence SGGSDS.

The protein belongs to the tRNA(Ile)-lysidine synthase family.

It is found in the cytoplasm. It catalyses the reaction cytidine(34) in tRNA(Ile2) + L-lysine + ATP = lysidine(34) in tRNA(Ile2) + AMP + diphosphate + H(+). Functionally, ligates lysine onto the cytidine present at position 34 of the AUA codon-specific tRNA(Ile) that contains the anticodon CAU, in an ATP-dependent manner. Cytidine is converted to lysidine, thus changing the amino acid specificity of the tRNA from methionine to isoleucine. This chain is tRNA(Ile)-lysidine synthase, found in Rickettsia bellii (strain RML369-C).